Consider the following 111-residue polypeptide: MQSNNKLKKNQDFRMVYQKGRSMANKLLIIYIVNNNLEYNRIGFTVSKKVGNSVVRSRVKRLMKESYRLNEGKIKTSHDIVFIARPNCKESTYKEIESALLHLIRKMKLIS.

The protein belongs to the RnpA family. In terms of assembly, consists of a catalytic RNA component (M1 or rnpB) and a protein subunit.

It carries out the reaction Endonucleolytic cleavage of RNA, removing 5'-extranucleotides from tRNA precursor.. Its function is as follows. RNaseP catalyzes the removal of the 5'-leader sequence from pre-tRNA to produce the mature 5'-terminus. It can also cleave other RNA substrates such as 4.5S RNA. The protein component plays an auxiliary but essential role in vivo by binding to the 5'-leader sequence and broadening the substrate specificity of the ribozyme. This is Ribonuclease P protein component from Alkaliphilus metalliredigens (strain QYMF).